Consider the following 426-residue polypeptide: Putative phosphate permease TC_0064 (426 aa).

The next 11 membrane-spanning stretches (helical) occupy residues 1–21 (MWWL…NIGA), 37–57 (LTLR…AVVL), 83–103 (VFGM…ASFF), 104–124 (GWPV…GIIL), 140–160 (VSWL…FSFI), 183–203 (AIII…ARVV), 207–227 (VAFR…IWGV), 260–280 (LVVE…MSFA), 309–329 (VLFI…ATWG), 365–385 (FGFP…VGLA), and 399–419 (IVLS…MFFL).

It belongs to the inorganic phosphate transporter (PiT) (TC 2.A.20) family.

The protein localises to the cell membrane. In terms of biological role, potential transporter for phosphate. This chain is Putative phosphate permease TC_0064, found in Chlamydia muridarum (strain MoPn / Nigg).